The following is a 334-amino-acid chain: MSLDIDQIALHQMIKLDEQTLELVLRDTPLDVSPAVEDMMAELHRVYSAKSKAYGIFTPESELADAVRSCRRGNENFLAFSRTATGRLRDELAKYPFAEGGTVLFCQYRYLAVEYLLIAVLGTCQSMLVNEQLDISSTQYLDIHHADIVACIDLTEWETQPASTRYLTFLKGRVGRKVSDFFMDFLAAAEGLDTKAQNRGLLQAVDDYCTDAALDNRQRQEVRQQVHSYCKEQLQAGEDIALVELSATLAPVSDKTFQAFSSEQGYALEETFPADRGTLLQLTKYAGSGGGVTLNFDAHLLGERIFWDPATDTLTIKGTPPNLRDQLTRRQNGK.

The protein belongs to the YejK family.

The protein resides in the cytoplasm. The protein localises to the nucleoid. The protein is Nucleoid-associated protein SG1574 of Sodalis glossinidius (strain morsitans).